Here is an 85-residue protein sequence, read N- to C-terminus: MKLLLLLTISASMLIEGLVNADGYIRGGDGCKVSCVINHVFCDNECKAAGGSYGYCWAWGLACWCEGLPADREWDYETNTCGGKK.

Residues 1–21 (MKLLLLLTISASMLIEGLVNA) form the signal peptide. The LCN-type CS-alpha/beta domain maps to 22–82 (DGYIRGGDGC…EWDYETNTCG (61 aa)). 4 cysteine pairs are disulfide-bonded: cysteine 31–cysteine 81, cysteine 35–cysteine 56, cysteine 42–cysteine 63, and cysteine 46–cysteine 65. At glycine 82 the chain carries Glycine amide.

Belongs to the long (4 C-C) scorpion toxin superfamily. Sodium channel inhibitor family. Beta subfamily. Expressed by the venom gland.

The protein resides in the secreted. Depressant insect beta-toxins cause a transient contraction paralysis followed by a slow flaccid paralysis. They bind voltage-independently at site-4 of sodium channels (Nav) and block action potentials, primarily by depolarizing the axonal membrane and suppressing the sodium current. This depressant toxin is active only on insects. It is found in a relatively small amount in the venom, and its activity on insects is 10-fold higher compared to other known depressant toxins. The sequence is that of Beta-insect depressant toxin Lqh-dprIT3a from Leiurus hebraeus (Hebrew deathstalker scorpion).